Consider the following 469-residue polypeptide: Solute carrier family 52, riboflavin transporter, member 3 (469 aa).

Residues 1-2 lie on the Cytoplasmic side of the membrane; that stretch reads MA. A helical transmembrane segment spans residues 3-23; it reads FLMHLLVCVFGMGSWVTINGL. Residues 24–43 are Extracellular-facing; it reads WVELPLLVMELPEGWYLPSY. A helical membrane pass occupies residues 44 to 64; the sequence is LTVVIQLANIGPLLVTLLHHF. The Cytoplasmic portion of the chain corresponds to 65–71; the sequence is RPSCLSE. Residues 72 to 92 traverse the membrane as a helical segment; the sequence is VPIIFTLLGVGTVTCIIFAFL. Topologically, residues 93–97 are extracellular; the sequence is WNMTS. A glycan (N-linked (GlcNAc...) asparagine) is linked at asparagine 94. A helical transmembrane segment spans residues 98–118; that stretch reads WVLDGHHSIAFLVLTFFLALV. Topologically, residues 119-137 are cytoplasmic; the sequence is DCTSSVTFLPFMSRLPTYY. Residues 138–158 form a helical membrane-spanning segment; sequence LTTFFVGEGLSGLLPALVALA. Residues 159–220 are Extracellular-facing; sequence QGSGLTTCVN…SRYLPAHFSP (62 aa). Asparagine 168 is a glycosylation site (N-linked (GlcNAc...) asparagine). A helical membrane pass occupies residues 221 to 241; it reads LVFFLLLSIMMACCLVAFFVL. Residues 242 to 292 are Cytoplasmic-facing; sequence QRQPRCWEASVEDLLNDQVTLHSIRPREENDLGPAGTVDSSQGQGYLEEKA. Position 251 is a phosphoserine (serine 251). Residues 293–313 traverse the membrane as a helical segment; it reads APCCPAHLAFIYTLVAFVNAL. Residues 314–335 are Extracellular-facing; sequence TNGMLPSVQTYSCLSYGPVAYH. The helical transmembrane segment at 336-356 threads the bilayer; sequence LAATLSIVANPLASLVSMFLP. At 357–359 the chain is on the cytoplasmic side; the sequence is NRS. Residues 360–380 form a helical membrane-spanning segment; sequence LLFLGVLSVLGTCFGGYNMAM. At 381 to 396 the chain is on the extracellular side; sequence AVMSPCPLLQGHWGGE. Cysteine 386 and cysteine 463 form a disulfide bridge. A helical membrane pass occupies residues 397-417; sequence VLIVASWVLFSGCLSYVKVML. Residues 418 to 427 are Cytoplasmic-facing; that stretch reads GVVLRDLSRS. Residues 428 to 448 traverse the membrane as a helical segment; the sequence is ALLWCGAAVQLGSLLGALLMF. Residues 449–469 are Extracellular-facing; that stretch reads PLVNVLRLFSSADFCNLHCPA.

Belongs to the riboflavin transporter family. Predominantly expressed in testis. Highly expressed in small intestine and prostate.

It localises to the apical cell membrane. The protein resides in the cell membrane. It is found in the nucleus membrane. Its subcellular location is the cytoplasm. The catalysed reaction is riboflavin(in) = riboflavin(out). Activity is strongly inhibited by riboflavin analogs, such as lumiflavin, flavin mononucleotide (FMN), flavin adenine dinucleotide (FAD), by methylene blue, and to a lesser extent by amiloride. Riboflavin transport is Na(+)-independent at low pH but significantly reduced by Na(+) depletion under neutral pH conditions. Functionally, plasma membrane transporter mediating the uptake by cells of the water soluble vitamin B2/riboflavin that plays a key role in biochemical oxidation-reduction reactions of the carbohydrate, lipid, and amino acid metabolism. Humans are unable to synthesize vitamin B2/riboflavin and must obtain it via intestinal absorption. This is Solute carrier family 52, riboflavin transporter, member 3 (SLC52A3) from Homo sapiens (Human).